Reading from the N-terminus, the 260-residue chain is Zinc finger protein 575 (260 aa).

The interval 22–81 is disordered; sequence PGLGPGRWLLPGAHQPSCPPAPHQGPLQKPSQSAPGPTASASAPPRPRRRPPPQRPHRCP. The span at 51–64 shows a compositional bias: low complexity; the sequence is PSQSAPGPTASASA. Residues 67–78 show a composition bias toward basic residues; the sequence is RPRRRPPPQRPH. 6 consecutive C2H2-type zinc fingers follow at residues 78–100, 106–128, 134–156, 162–184, 192–214, and 228–255; these read HRCPDCDKAFSYPSKLATHRLAH, HPCPDCPKAFSYPSKLAAHRLTH, HPCPHCPKAFGHRSKLAAHLWTH, YPCPDCPKSFCYPSKLAAHRHTH, YPCPHCPKAFSFPSKLAAHRLCH, and HRCSSCGQAFGQRRLLLLHQRSHHQVEH.

This sequence belongs to the krueppel C2H2-type zinc-finger protein family.

The protein localises to the nucleus. Functionally, may be involved in transcriptional regulation. This chain is Zinc finger protein 575 (ZNF575), found in Macaca fascicularis (Crab-eating macaque).